Reading from the N-terminus, the 536-residue chain is Sensory rhodopsin I transducer (536 aa).

Topologically, residues 2–14 (TIAWARRRYGVKL) are cytoplasmic. A helical membrane pass occupies residues 15–29 (GLGYIATAGLLVGVG). The Extracellular segment spans residues 30–39 (VTTNDVPSTI). Residues 40–55 (VAGIAGLLTLGSINAA) traverse the membrane as a helical segment. Residues 55–107 (AETVASIKEIAAQTERVANGNLEQEVTSTRTDEFGSLADSIEQMRQSLRGRLN) form the HAMP 1 domain. Residues 56 to 536 (ETVASIKEIA…MRAGADGGGA (481 aa)) are Cytoplasmic-facing. The tract at residues 116–145 (LEETQAEAETAREEAEQAKQEAQAAEREAR) is disordered. Basic and acidic residues predominate over residues 124–145 (ETAREEAEQAKQEAQAAEREAR). One can recognise an HAMP 2 domain in the interval 149–202 (ATYQDTAKRYGETMEAAATGDLTQRVDVDTDHEAMETVGTAFNQMMDDLQATVR). The Methyl-accepting transducer domain occupies 221–459 (TSADIEASAG…STATSVERVA (239 aa)). At Glu-266 the chain carries Glutamate methyl ester (Glu). A disordered region spans residues 278–307 (SEDVATASDAARDSSKSALDEMSSIETEVD). Residues 287-296 (AARDSSKSAL) are compositionally biased toward basic and acidic residues. Glu-473 carries the post-translational modification Glutamate methyl ester (Glu). Residues 512–536 (TEDSETAGGSVEQPVMRAGADGGGA) are disordered.

This sequence belongs to the methyl-accepting chemotaxis (MCP) protein family. Post-translationally, methylated by CheR.

Its subcellular location is the cell membrane. Transduces signals from the phototaxis receptor sensory rhodopsin I (SR-I) to the flagellar motor. Responds to light changes through the variation of the level of methylation. This chain is Sensory rhodopsin I transducer (htr1), found in Halobacterium salinarum (strain ATCC 29341 / DSM 671 / R1).